Consider the following 1176-residue polypeptide: MSLPNHSGSSAFKSFSYIVGTGIKRAAKLSTRNPIEMIVVVLILSSFSYFYLFNLARTSDIFSGTVTRLYPTSVYAPTKDHSFSVVDRTADSTIANNAVKVHLHQIVVSDPKHGVLSRQTLASVLRFQQMAENEIYVPDSTAVNRFAFNKDLCYKTTLPSSYSSHSSDSNSNSNLNSKTSPCFAHSPADIWQDEATLLADKNIRSTIEANLDTAKNVFGDLQLNATYASSVTLSYAFNTTGDYREHLADMWKHKVATLPPADLVSLSNIGQQENVFAWLFIVTRNVIFRVKELIDLADNIDIIVILVGYIMMIATFISLYVNMRAMGSRYTLATAVVFNGFFSFMLALLTVRALGVDVYPVVLAEAIPFLAVTIGFERPFKLTKRVFQFSKETPLTKQEIRTTIMRAVDTVALPIARDCFMEIIVLVLGAKSGISGLEEFCLLSAILLAYDFIIMFTWYTAVLALKLELLRIREINGISADDIKKGTKKSTGYIRRTVIKAFSDDHAAGANTANQKADGPIIGRVKLLMIVGFVVMHIFKFCSAFQSVGPQVNITEPSIAVVLDQLLEQHKASSQASLPLFVQVFPAMPFHVATVNKSFVPDAITRPLEALFDTYAVYIQHPVISKWLTIALFVSLFLNTYLFNVAKQPKQIVEQVNQDKKITNAIESTNNTHIEVTEKQKPTIQSPGPVVSSAVVMSPNHKRSHNHHHSHSHSHNHHSNHHQSDIVRPIDECVALVRTPEMLNDEEVISLVENGKMASYALEKVLGDLQRAVGIRRALISRASITKTLEASALPLENYHYDKVMGACCENVIGYMPIPVGVAGPMNIDGDLIHIPMATTEGCLVASTARGCKAINAGGGASTIVIADGMTRGPCVEFPTILRAAACKLWIENEGNDIVTNAFNSTSRFARLRKLKIALAGKLVFIRFSTTTGDAMGMNMISKGCEKALSIITEHFPDMQIISLSGNYCTDKKPAAINWIEGRGKSVVTEAVIPGAIVEKVLKTTVAALVELNISKNLIGSAMAGSVGGFNAHAANILTAIYLATGQDPAQNVESSNCITLMKAVNDTKDLHISCTMPSIEVGTIGGGTILPPQQSMLDMLGVRGPHPTEPGKNAQRLARIICAAVMAGELSLCAALAAGHLVKAHMAHNRGTQAPTITSGPAPSTGTEPGTCIKS.

Residues 1-34 are Cytoplasmic-facing; that stretch reads MSLPNHSGSSAFKSFSYIVGTGIKRAAKLSTRNP. The chain crosses the membrane as a helical span at residues 35 to 55; sequence IEMIVVVLILSSFSYFYLFNL. The Lumenal segment spans residues 56–299; the sequence is ARTSDIFSGT…VKELIDLADN (244 aa). N-linked (GlcNAc...) asparagine glycosylation is found at asparagine 224 and asparagine 238. Residues 300–320 traverse the membrane as a helical segment; that stretch reads IDIIVILVGYIMMIATFISLY. In terms of domain architecture, SSD spans 301 to 465; it reads DIIVILVGYI…FTWYTAVLAL (165 aa). Residues 321–330 are Cytoplasmic-facing; sequence VNMRAMGSRY. The helical transmembrane segment at 331-351 threads the bilayer; it reads TLATAVVFNGFFSFMLALLTV. The Lumenal segment spans residues 352-355; sequence RALG. The helical transmembrane segment at 356 to 376 threads the bilayer; the sequence is VDVYPVVLAEAIPFLAVTIGF. The Cytoplasmic segment spans residues 377-422; it reads ERPFKLTKRVFQFSKETPLTKQEIRTTIMRAVDTVALPIARDCFME. A helical membrane pass occupies residues 423-443; that stretch reads IIVLVLGAKSGISGLEEFCLL. Serine 444 is a topological domain (lumenal). Residues 445 to 465 traverse the membrane as a helical segment; the sequence is AILLAYDFIIMFTWYTAVLAL. The Cytoplasmic segment spans residues 466–524; sequence KLELLRIREINGISADDIKKGTKKSTGYIRRTVIKAFSDDHAAGANTANQKADGPIIGR. The helical transmembrane segment at 525–545 threads the bilayer; it reads VKLLMIVGFVVMHIFKFCSAF. Residues 546–622 are Lumenal-facing; sequence QSVGPQVNIT…DTYAVYIQHP (77 aa). N-linked (GlcNAc...) asparagine glycans are attached at residues asparagine 553 and asparagine 596. The helical transmembrane segment at 623–643 threads the bilayer; the sequence is VISKWLTIALFVSLFLNTYLF. The Cytoplasmic segment spans residues 644–1176; sequence NVAKQPKQIV…GTEPGTCIKS (533 aa). The interval 699-724 is disordered; it reads PNHKRSHNHHHSHSHSHNHHSNHHQS. The segment covering 700–721 has biased composition (basic residues); the sequence is NHKRSHNHHHSHSHSHNHHSNH. The active-site Charge relay system is the glutamate 841. 847-853 serves as a coordination point for CoA; it reads STARGCK. NADP(+) contacts are provided by residues 907–909 and 934–942; these read SRF and DAMGMNMIS. Residue lysine 972 is the Charge relay system of the active site. 1001–1003 is a CoA binding site; that stretch reads VLK. Aspartate 1048 acts as the Charge relay system in catalysis. CoA is bound at residue 1145–1146; that stretch reads AH. Residue histidine 1146 is the Proton donor of the active site. 1150 to 1151 is a binding site for NADP(+); the sequence is NR. A disordered region spans residues 1153–1176; that stretch reads TQAPTITSGPAPSTGTEPGTCIKS.

This sequence belongs to the HMG-CoA reductase family.

The protein resides in the endoplasmic reticulum membrane. It catalyses the reaction (R)-mevalonate + 2 NADP(+) + CoA = (3S)-3-hydroxy-3-methylglutaryl-CoA + 2 NADPH + 2 H(+). It participates in metabolic intermediate biosynthesis; (R)-mevalonate biosynthesis; (R)-mevalonate from acetyl-CoA: step 3/3. In terms of biological role, HMG-CoA reductase; part of the first module of ergosterol biosynthesis pathway that includes the early steps of the pathway, conserved across all eukaryotes, and which results in the formation of mevalonate from acetyl-coenzyme A (acetyl-CoA). In this module, the cytosolic acetyl-CoA acetyltransferase catalyzes the formation of acetoacetyl-CoA. The hydroxymethylglutaryl-CoA synthase then condenses acetyl-CoA with acetoacetyl-CoA to form HMG-CoA. The rate-limiting step of the early module is the reduction to mevalonate by the 3-hydroxy-3-methylglutaryl-coenzyme A (HMG-CoA) reductase hmgA. This is 3-hydroxy-3-methylglutaryl-coenzyme A reductase from Phycomyces blakesleeanus (strain ATCC 8743b / DSM 1359 / FGSC 10004 / NBRC 33097 / NRRL 1555).